A 132-amino-acid polypeptide reads, in one-letter code: Agouti-signaling protein (132 aa).

The signal sequence occupies residues 1-22 (MDVTRLLLATLLVFLCFFTAYS). N-linked (GlcNAc...) asparagine glycosylation is present at Asn39. Positions 61–87 (QISRKEAEKKRSSKKEASMKKVARPRT) are disordered. Basic and acidic residues predominate over residues 63–79 (SRKEAEKKRSSKKEASM). Cystine bridges form between Cys93–Cys108, Cys100–Cys114, Cys107–Cys125, Cys111–Cys132, and Cys116–Cys123. In terms of domain architecture, Agouti spans 93–132 (CVATRDSCKPPAPACCDPCAFCQCRFFRSACSCRVLSLNC).

It localises to the secreted. Involved in the regulation of melanogenesis. The binding of ASP to MC1R precludes alpha-MSH initiated signaling and thus blocks production of cAMP, leading to a down-regulation of eumelanogenesis (brown/black pigment) and thus increasing synthesis of pheomelanin (yellow/red pigment). This chain is Agouti-signaling protein (ASIP), found in Macaca hecki (Heck's macaque).